We begin with the raw amino-acid sequence, 119 residues long: Flagellar transcriptional regulator FlhD (119 aa).

The protein belongs to the FlhD family. Homodimer; disulfide-linked. Forms a heterohexamer composed of two FlhC and four FlhD subunits. Each FlhC binds a FlhD dimer, forming a heterotrimer, and a hexamer assembles by dimerization of two heterotrimers.

The protein resides in the cytoplasm. Functions in complex with FlhC as a master transcriptional regulator that regulates transcription of several flagellar and non-flagellar operons by binding to their promoter region. Activates expression of class 2 flagellar genes, including fliA, which is a flagellum-specific sigma factor that turns on the class 3 genes. Also regulates genes whose products function in a variety of physiological pathways. In Shigella dysenteriae serotype 1 (strain Sd197), this protein is Flagellar transcriptional regulator FlhD.